A 346-amino-acid chain; its full sequence is Probable 3-hydroxyacyl-CoA dehydrogenase (346 aa).

The segment at 322-346 (RANLSPSATPCTPWKARKATSCAPP) is disordered.

This sequence belongs to the 3-hydroxyacyl-CoA dehydrogenase family.

It carries out the reaction a (3S)-3-hydroxyacyl-CoA + NAD(+) = a 3-oxoacyl-CoA + NADH + H(+). This chain is Probable 3-hydroxyacyl-CoA dehydrogenase, found in Deinococcus radiodurans (strain ATCC 13939 / DSM 20539 / JCM 16871 / CCUG 27074 / LMG 4051 / NBRC 15346 / NCIMB 9279 / VKM B-1422 / R1).